A 681-amino-acid chain; its full sequence is Potassium-transporting ATPase ATP-binding subunit (681 aa).

The next 4 membrane-spanning stretches (helical) occupy residues 30–50 (LLVY…FFGI), 59–79 (LAIA…EAIA), 216–236 (ILLV…LPFT), and 255–275 (IALL…SIGI). Residue Asp-306 is the 4-aspartylphosphate intermediate of the active site. ATP-binding positions include Asp-343, Glu-347, 376-383 (FTATTRMS), and Lys-394. 2 residues coordinate Mg(2+): Asp-517 and Asp-521. 3 consecutive transmembrane segments (helical) span residues 587–607 (FAII…LNLM), 615–635 (AILS…PLSL), and 661–681 (LVAP…LGIV).

It belongs to the cation transport ATPase (P-type) (TC 3.A.3) family. Type IA subfamily. As to quaternary structure, the system is composed of three essential subunits: KdpA, KdpB and KdpC.

It is found in the cell membrane. The enzyme catalyses K(+)(out) + ATP + H2O = K(+)(in) + ADP + phosphate + H(+). Part of the high-affinity ATP-driven potassium transport (or Kdp) system, which catalyzes the hydrolysis of ATP coupled with the electrogenic transport of potassium into the cytoplasm. This subunit is responsible for energy coupling to the transport system and for the release of the potassium ions to the cytoplasm. This chain is Potassium-transporting ATPase ATP-binding subunit, found in Listeria welshimeri serovar 6b (strain ATCC 35897 / DSM 20650 / CCUG 15529 / CIP 8149 / NCTC 11857 / SLCC 5334 / V8).